The chain runs to 441 residues: Ribosomal protein uS12 methylthiotransferase RimO (441 aa).

The region spanning 8 to 118 is the MTTase N-terminal domain; it reads PKIGFVSLGC…VLEHVHHYVP (111 aa). Residues Cys-17, Cys-53, Cys-82, Cys-150, Cys-154, and Cys-157 each contribute to the [4Fe-4S] cluster site. The region spanning 136–373 is the Radical SAM core domain; that stretch reads LTPRHYAYLK…MQLQQQISAE (238 aa). The region spanning 376-441 is the TRAM domain; that stretch reads QEKVGREILV…DEYDLWGSRV (66 aa).

It belongs to the methylthiotransferase family. RimO subfamily. Requires [4Fe-4S] cluster as cofactor.

Its subcellular location is the cytoplasm. It catalyses the reaction L-aspartate(89)-[ribosomal protein uS12]-hydrogen + (sulfur carrier)-SH + AH2 + 2 S-adenosyl-L-methionine = 3-methylsulfanyl-L-aspartate(89)-[ribosomal protein uS12]-hydrogen + (sulfur carrier)-H + 5'-deoxyadenosine + L-methionine + A + S-adenosyl-L-homocysteine + 2 H(+). Functionally, catalyzes the methylthiolation of an aspartic acid residue of ribosomal protein uS12. The polypeptide is Ribosomal protein uS12 methylthiotransferase RimO (Shigella flexneri).